Reading from the N-terminus, the 354-residue chain is MGRLVAVGLLGIALALLGERLLALRNRLKASREVESVDLPHCHLIKGIEAGSEDIDILPNGLAFFSVGLKFPGLHSFAPDKPGGILMMDLKEEKPRARELRISRGFDLASFNPHGISTFIDNDDTVYLFVVNHPEFKNTVEIFKFEEAENSLLHLKTVKHELLPSVNDITAVGPAHFYATNDHYFSDPFLKYLETYLNLHWANVVYYSPNEVKVVAEGFDSANGINISPDDKYIYVADILAHEIHVLEKHTNMNLTQLKVLELDTLVDNLSIDPSSGDIWVGCHPNGQKLFVYDPNNPPSSEVLRIQNILSEKPTVTTVYANNGSVLQGSSVASVYDGKLLIGTLYHRALYCEL.

Residues C42 and C352 are joined by a disulfide bond. Ca(2+)-binding residues include E53 and D54. The Proton acceptor role is filled by H114. The Ca(2+) site is built by I116, N167, D168, and N223. An N-linked (GlcNAc...) asparagine glycan is attached at N254. Ca(2+) contacts are provided by D268 and N269. N-linked (GlcNAc...) asparagine glycosylation is found at N269 and N323.

Belongs to the paraoxonase family. As to quaternary structure, homotrimer. Requires Ca(2+) as cofactor. The signal sequence is not cleaved. In terms of tissue distribution, widely expressed with highest expression in liver, lung, placenta, testis and heart.

The protein resides in the membrane. The catalysed reaction is a phenyl acetate + H2O = a phenol + acetate + H(+). It carries out the reaction an N-acyl-L-homoserine lactone + H2O = an N-acyl-L-homoserine + H(+). Functionally, capable of hydrolyzing lactones and a number of aromatic carboxylic acid esters. Has antioxidant activity. Is not associated with high density lipoprotein. Prevents LDL lipid peroxidation, reverses the oxidation of mildly oxidized LDL, and inhibits the ability of MM-LDL to induce monocyte chemotaxis. The sequence is that of Serum paraoxonase/arylesterase 2 (PON2) from Homo sapiens (Human).